The primary structure comprises 270 residues: 5'-AMP-activated protein kinase subunit beta-1 (270 aa).

A disordered region spans residues 1–43; the sequence is MGNTSSERAALERQAGHKTPRRDSSGGTKDGDRPKILMDSPED. Gly-2 carries the N-myristoyl glycine lipid modification. Thr-4 bears the Phosphothreonine mark. Residues Ser-5 and Ser-6 each carry the phosphoserine modification. The span at 9 to 36 shows a compositional bias: basic and acidic residues; that stretch reads AALERQAGHKTPRRDSSGGTKDGDRPKI. Phosphothreonine is present on Thr-19. Ser-24 and Ser-25 each carry phosphoserine; by autocatalysis. 3 positions are modified to phosphoserine: Ser-40, Ser-96, and Ser-101. The segment at 68-163 is glycogen-binding domain; that stretch reads EVNEKAPAQA…QVKKTDFEVF (96 aa). Ser-108 carries the phosphoserine; by autocatalysis modification. Thr-148 bears the Phosphothreonine mark. Ser-182 bears the Phosphoserine mark. N6-succinyllysine is present on Lys-201.

Belongs to the 5'-AMP-activated protein kinase beta subunit family. In terms of assembly, AMPK is a heterotrimer of an alpha catalytic subunit (PRKAA1 or PRKAA2), a beta (PRKAB1 or PRKAB2) and a gamma non-catalytic subunits (PRKAG1, PRKAG2 or PRKAG3). Interacts with FNIP1 and FNIP2. Phosphorylated when associated with the catalytic subunit (PRKAA1 or PRKAA2). Phosphorylated by ULK1; leading to negatively regulate AMPK activity and suggesting the existence of a regulatory feedback loop between ULK1 and AMPK. As to expression, highly expressed in kidney, heart, white adipose tissue, lung and spleen.

Non-catalytic subunit of AMP-activated protein kinase (AMPK), an energy sensor protein kinase that plays a key role in regulating cellular energy metabolism. In response to reduction of intracellular ATP levels, AMPK activates energy-producing pathways and inhibits energy-consuming processes: inhibits protein, carbohydrate and lipid biosynthesis, as well as cell growth and proliferation. AMPK acts via direct phosphorylation of metabolic enzymes, and by longer-term effects via phosphorylation of transcription regulators. Also acts as a regulator of cellular polarity by remodeling the actin cytoskeleton; probably by indirectly activating myosin. Beta non-catalytic subunit acts as a scaffold on which the AMPK complex assembles, via its C-terminus that bridges alpha (PRKAA1 or PRKAA2) and gamma subunits (PRKAG1, PRKAG2 or PRKAG3). The chain is 5'-AMP-activated protein kinase subunit beta-1 (Prkab1) from Rattus norvegicus (Rat).